Consider the following 688-residue polypeptide: MGSAESKISFRHAILASLNTKPEREIYEFLFTCNLTENDVFSFILAQDIRICRDSNKFDNLAILLQVCVLNIVSIQNKFSEQYPLKKNALLNSFLILTRLLPYLYESTNSSNWVRTYFQKDFSQTVDDLKPLLSELGLNYEIELPNSFSNLTSLLSSTFQLCFQHEFTVSKYASSEESIWSAGIAIPEIAHPPSYDHRLHQSLLSCFLVVLLSNTLYDSIDELDFSVLNSIVSLDAKDIYIRVICSFVNTGFIDSTNWFLNSFNQRRNSLQLYSSWFIILILSDARIKENTHLYANGEGQHIKNHLLELFKKLHRTQDFLIIAESINKFLSNPLKKERQIITFMGDFKRCVVESLCFLFLLLTNQPRFTDELVNFKSSNEMMMNLLFIHVKYSGDTENSYMSSLAGYCLQQLVSHEKLVKAACHIDKSLISPSPSSQFPVFDTSVAIYVIQVLCTLENPSSIEYNIISNILFSIPTIPLKNASPIVELISYVMKPEFFMKSQQNASDCKKLLSSFLYFLINNFNDNLHIIELLQKDKRKFEPIIAWSETEFSEFFVTSNISQSALDNGLVDQAGLDEQKWYEKWFHDLNIPLLRKCLTLRTDKNPFIEQPDEPNVTKKIYRVTYTDALQRWNLVNIWRHIFKETVTLNSGISCPWYGTNVKLFTVREVRQPTILQSRSLGEFQGRLFS.

This sequence belongs to the hid-1 family.

The protein localises to the cytoplasm. The protein resides in the nucleus. The sequence is that of Hid-1 family protein P19A11.07c from Schizosaccharomyces pombe (strain 972 / ATCC 24843) (Fission yeast).